The primary structure comprises 456 residues: 3-isopropylmalate dehydratase large subunit (456 aa).

Residues C336, C396, and C399 each coordinate [4Fe-4S] cluster.

Belongs to the aconitase/IPM isomerase family. LeuC type 1 subfamily. In terms of assembly, heterodimer of LeuC and LeuD. Requires [4Fe-4S] cluster as cofactor.

It carries out the reaction (2R,3S)-3-isopropylmalate = (2S)-2-isopropylmalate. The protein operates within amino-acid biosynthesis; L-leucine biosynthesis; L-leucine from 3-methyl-2-oxobutanoate: step 2/4. Catalyzes the isomerization between 2-isopropylmalate and 3-isopropylmalate, via the formation of 2-isopropylmaleate. The polypeptide is 3-isopropylmalate dehydratase large subunit (Staphylococcus aureus (strain MW2)).